An 875-amino-acid polypeptide reads, in one-letter code: Ubiquitin-protein ligase E3A (875 aa).

The C4-type; atypical zinc-finger motif lies at 44-83 (CGNEACTNEFCASCPTFLRMDNNAAAIKALELYKINAKLC). Residues 175 to 186 (KEELKSLQAKDE) show a composition bias toward basic and acidic residues. The disordered stretch occupies residues 175-226 (KEELKSLQAKDEDKDEDEKEKAACSAAAMEEDSEASSSRIGDSSQGDNNLQK). The segment covering 213–225 (RIGDSSQGDNNLQ) has biased composition (polar residues). Residue serine 218 is modified to Phosphoserine. Residues 401 to 418 (IPESSELTLQELLGEERR) are E6-binding. Residues 418–517 (RNKKGPRVDP…TVLYSLVQGQ (100 aa)) are interaction with HCV core protein. Tyrosine 659 carries the phosphotyrosine; by ABL1 modification. Residues 776 to 875 (YDGGYTRDSV…ITYAKGFGML (100 aa)) enclose the HECT domain. Cysteine 843 serves as the catalytic Glycyl thioester intermediate.

In terms of assembly, the active form is probably a homotrimer. Binds UBQLN1 and UBQLN2. Interacts with the 26S proteasome. Interacts with BPY2. Interacts with HIF1AN, MAPK6 and NEURL4; interaction with MAPK6 may be mediated by NEURL4. Interacts with the proteasomal subunit PSMD4. Interacts with ESR1 and WBP2. Interacts with BMAL1. Interacts with ARC. As to quaternary structure, (Microbial infection) Interacts with HCV core protein and targets it to degradation. (Microbial infection) Interacts with the E6 protein of the cancer-associated human papillomavirus types 16 and 18. The E6/E6-AP complex binds to and targets the p53/TP53 tumor-suppressor protein for ubiquitin-mediated proteolysis. Post-translationally, phosphorylation at Tyr-659 by ABL1 impairs E3 ligase activity and protects p53/TP53 from degradation in (HPV)-infected cells.

The protein resides in the cytoplasm. The protein localises to the nucleus. The catalysed reaction is S-ubiquitinyl-[E2 ubiquitin-conjugating enzyme]-L-cysteine + [acceptor protein]-L-lysine = [E2 ubiquitin-conjugating enzyme]-L-cysteine + N(6)-ubiquitinyl-[acceptor protein]-L-lysine.. It functions in the pathway protein modification; protein ubiquitination. E3 ubiquitin-protein ligase which accepts ubiquitin from an E2 ubiquitin-conjugating enzyme in the form of a thioester and transfers it to its substrates. Several substrates have been identified including the BMAL1, ARC, LAMTOR1, RAD23A and RAD23B, MCM7 (which is involved in DNA replication), annexin A1, the PML tumor suppressor, and the cell cycle regulator CDKN1B. Additionally, may function as a cellular quality control ubiquitin ligase by helping the degradation of the cytoplasmic misfolded proteins. Finally, UBE3A also promotes its own degradation in vivo. Plays an important role in the regulation of the circadian clock: involved in the ubiquitination of the core clock component BMAL1, leading to its proteasomal degradation. Acts as transcriptional coactivator of progesterone receptor PGR upon progesterone hormone activation. Acts as a regulator of synaptic development by mediating ubiquitination and degradation of ARC. Required for synaptic remodeling in neurons by mediating ubiquitination and degradation of LAMTOR1, thereby limiting mTORC1 signaling and activity-dependent synaptic remodeling. Synergizes with WBP2 in enhancing PGR activity. In terms of biological role, (Microbial infection) Catalyzes the high-risk human papilloma virus E6-mediated ubiquitination of p53/TP53, contributing to the neoplastic progression of cells infected by these viruses. The sequence is that of Ubiquitin-protein ligase E3A from Homo sapiens (Human).